The following is a 407-amino-acid chain: Guanine nucleotide-binding protein alpha-1 subunit (407 aa).

A lipid anchor (N-myristoyl glycine) is attached at glycine 2. The S-palmitoyl cysteine moiety is linked to residue cysteine 3. The G-alpha domain occupies 73–407; that stretch reads NDIKVLLLGA…MSNNLQSLMF (335 aa). The segment at 76–89 is G1 motif; sequence KVLLLGAGDSGKTT. GTP contacts are provided by aspartate 84, serine 85, glycine 86, lysine 87, threonine 88, threonine 89, aspartate 190, leucine 215, threonine 221, glycine 243, asparagine 309, lysine 310, aspartate 312, and alanine 380. Threonine 88 is a Mg(2+) binding site. The interval 213 to 221 is G2 motif; that stretch reads DILHCRIKT. Position 221 (threonine 221) interacts with Mg(2+). The segment at 236 to 245 is G3 motif; it reads YRFFDVGGQR. Residues 305–312 are G4 motif; sequence ILFLNKLD. Positions 378–383 are G5 motif; it reads TTATDT.

Belongs to the G-alpha family. G(q) subfamily. As to quaternary structure, g proteins are composed of 3 units; alpha, beta and gamma. The alpha chain contains the guanine nucleotide binding site. Requires Mg(2+) as cofactor.

Its function is as follows. Implicated in the mating and sporulation pathway. Probably coupled to mating-factor receptors. May act in concert with Ras1. In Schizosaccharomyces pombe (strain 972 / ATCC 24843) (Fission yeast), this protein is Guanine nucleotide-binding protein alpha-1 subunit (gpa1).